The sequence spans 465 residues: Alpha-2A adrenergic receptor (465 aa).

Topologically, residues 1–48 (MFRQEQPLAEGSFAPMGSLQPDAGNSSWNGTEAPGGGTRATPYSLQVT) are extracellular. N-linked (GlcNAc...) asparagine glycans are attached at residues asparagine 25 and asparagine 29. A helical transmembrane segment spans residues 49 to 74 (LTLVCLAGLLMLFTVFGNVLVIIAVF). The Cytoplasmic portion of the chain corresponds to 75 to 85 (TSRALKAPQNL). The helical transmembrane segment at 86–111 (FLVSLASADILVATLVIPFSLANEVM) threads the bilayer. The Extracellular segment spans residues 112 to 121 (GYWYFGKVWC). A disulfide bond links cysteine 121 and cysteine 203. Residues 122–144 (EIYLALDVLFCTSSIVHLCAISL) form a helical membrane-spanning segment. The Cytoplasmic segment spans residues 145 to 164 (DRYWSITQAIEYNLKRTPRR). A helical transmembrane segment spans residues 165-188 (IKAIIVTVWVISAVISFPPLISIE). At 189 to 207 (KKGAGGGQQPAEPSCKIND) the chain is on the extracellular side. The helical transmembrane segment at 208–232 (QKWYVISSSIGSFFAPCLIMILVYV) threads the bilayer. Topologically, residues 233–389 (RIYQIAKRRT…RQNREKRFTF (157 aa)) are cytoplasmic. The segment at 242–377 (TRVPPSRRGP…RAGGAKASRW (136 aa)) is disordered. Positions 313-330 (SSEHAERPQGPGKPERGP) are enriched in basic and acidic residues. Serine 346 is modified (phosphoserine). Residues 353–364 (GAAGPGASGSGQ) are compositionally biased toward gly residues. At arginine 368 the chain carries Omega-N-methylarginine. A helical membrane pass occupies residues 390 to 414 (VLAVVIGVFVVCWFPFFFTYTLIAV). The Extracellular portion of the chain corresponds to 415–424 (GCPVPYQLFN). A helical membrane pass occupies residues 425–445 (FFFWFGYCNSSLNPVIYTIFN). Topologically, residues 446–465 (HDFRRAFKKILCRGDRKRIV) are cytoplasmic. The S-palmitoyl cysteine moiety is linked to residue cysteine 457.

This sequence belongs to the G-protein coupled receptor 1 family. Adrenergic receptor subfamily. ADRA2A sub-subfamily. As to expression, expressed in brain.

The protein localises to the cell membrane. Functionally, alpha-2 adrenergic receptors mediate the catecholamine-induced inhibition of adenylate cyclase through the action of G proteins. The sequence is that of Alpha-2A adrenergic receptor from Rattus norvegicus (Rat).